A 206-amino-acid polypeptide reads, in one-letter code: Large ribosomal subunit protein uL4 (206 aa).

Residues 44–80 form a disordered region; sequence KRAGTHSVKTRSTISGGGAKPWRQKGTGRARSGSNRS.

The protein belongs to the universal ribosomal protein uL4 family. Part of the 50S ribosomal subunit.

Its function is as follows. One of the primary rRNA binding proteins, this protein initially binds near the 5'-end of the 23S rRNA. It is important during the early stages of 50S assembly. It makes multiple contacts with different domains of the 23S rRNA in the assembled 50S subunit and ribosome. Forms part of the polypeptide exit tunnel. The polypeptide is Large ribosomal subunit protein uL4 (Oleidesulfovibrio alaskensis (strain ATCC BAA-1058 / DSM 17464 / G20) (Desulfovibrio alaskensis)).